The chain runs to 60 residues: MEKKLKITLVKSVIGQSERQKATVKSLGLRKLNQTVIKADTPEIRGMINKVSHLLKVEEI.

The protein belongs to the universal ribosomal protein uL30 family. Part of the 50S ribosomal subunit.

This chain is Large ribosomal subunit protein uL30, found in Carboxydothermus hydrogenoformans (strain ATCC BAA-161 / DSM 6008 / Z-2901).